The following is a 198-amino-acid chain: Recombination protein RecR (198 aa).

The C4-type zinc-finger motif lies at 57–72; that stretch reads CSVCGHITDRDPCYIC. Positions 80 to 175 constitute a Toprim domain; the sequence is SVVCVVQEPK…KVTRIAHGLP (96 aa).

The protein belongs to the RecR family.

May play a role in DNA repair. It seems to be involved in an RecBC-independent recombinational process of DNA repair. It may act with RecF and RecO. In Bacillus mycoides (strain KBAB4) (Bacillus weihenstephanensis), this protein is Recombination protein RecR.